The sequence spans 236 residues: Small ribosomal subunit protein uS2c (236 aa).

This sequence belongs to the universal ribosomal protein uS2 family.

It is found in the plastid. It localises to the chloroplast. The protein is Small ribosomal subunit protein uS2c (rps2) of Illicium oligandrum (Star anise).